A 612-amino-acid polypeptide reads, in one-letter code: tRNA 5-methylaminomethyl-2-thiouridine biosynthesis bifunctional protein MnmC (612 aa).

The tRNA (mnm(5)s(2)U34)-methyltransferase stretch occupies residues methionine 1 to glutamate 218. The tract at residues isoleucine 244–arginine 612 is FAD-dependent cmnm(5)s(2)U34 oxidoreductase.

This sequence in the N-terminal section; belongs to the methyltransferase superfamily. tRNA (mnm(5)s(2)U34)-methyltransferase family. The protein in the C-terminal section; belongs to the DAO family. FAD is required as a cofactor.

It is found in the cytoplasm. It catalyses the reaction 5-aminomethyl-2-thiouridine(34) in tRNA + S-adenosyl-L-methionine = 5-methylaminomethyl-2-thiouridine(34) in tRNA + S-adenosyl-L-homocysteine + H(+). Its function is as follows. Catalyzes the last two steps in the biosynthesis of 5-methylaminomethyl-2-thiouridine (mnm(5)s(2)U) at the wobble position (U34) in tRNA. Catalyzes the FAD-dependent demodification of cmnm(5)s(2)U34 to nm(5)s(2)U34, followed by the transfer of a methyl group from S-adenosyl-L-methionine to nm(5)s(2)U34, to form mnm(5)s(2)U34. The protein is tRNA 5-methylaminomethyl-2-thiouridine biosynthesis bifunctional protein MnmC of Campylobacter fetus subsp. fetus (strain 82-40).